Here is a 1066-residue protein sequence, read N- to C-terminus: Isoleucine--tRNA ligase (1066 aa).

The 'HIGH' region signature appears at 49–59 (PYVSGAIHLGT). Positions 625-629 (KMSKS) match the 'KMSKS' region motif. Lys-628 provides a ligand contact to ATP.

Belongs to the class-I aminoacyl-tRNA synthetase family. IleS type 2 subfamily. In terms of assembly, monomer. Requires Zn(2+) as cofactor.

It is found in the cytoplasm. It carries out the reaction tRNA(Ile) + L-isoleucine + ATP = L-isoleucyl-tRNA(Ile) + AMP + diphosphate. Its function is as follows. Catalyzes the attachment of isoleucine to tRNA(Ile). As IleRS can inadvertently accommodate and process structurally similar amino acids such as valine, to avoid such errors it has two additional distinct tRNA(Ile)-dependent editing activities. One activity is designated as 'pretransfer' editing and involves the hydrolysis of activated Val-AMP. The other activity is designated 'posttransfer' editing and involves deacylation of mischarged Val-tRNA(Ile). The protein is Isoleucine--tRNA ligase of Pyrococcus furiosus (strain ATCC 43587 / DSM 3638 / JCM 8422 / Vc1).